A 378-amino-acid polypeptide reads, in one-letter code: MPAQPAQENAQDADDAQANATMETRVAGQGQPKRVGRWTLAQLRQTDGIIPSQAGWNKGDSQKLMTNFGTPRNTQTRVKSENLAEIPEEVLMRTHGEVRLQSGTNKFESQRGMTGFGTGRDVCREGVHVNQAPSDLQPLDEEKIRLSDGIVRLQAGTNKYDSQKGMTGFGTARRETTKMTDSKHPDYDHERPDQSEIPLQAGTNKFASQKGMIGFGTSRRETTKICDSAHPEYDPESSIDSSTIPSQMGSNKYASQKGMTGFGQPRWEVLDPSISWQNRKSQGMVRLQSGTNRFASQQGMTGFGTPRNTTYEAEAGELPYEDMKKSETVIPSQAGWNRGDSQKGMTGFGAPRDVKGKHLKRIWELEYPEEAEASLDRL.

The span at M1–A20 shows a compositional bias: low complexity. The segment at M1 to V35 is disordered. 7 Calponin-like repeats span residues I50–Q75, V98–C123, V151–T176, I197–T222, I244–V269, V285–T310, and I330–K355. Residues E175–Q194 form a disordered region. The interval H230 to Q256 is disordered. Positions S238–Q256 are enriched in polar residues. The segment at P331–R352 is disordered.

The protein belongs to the calponin family. Found in the longitudinal muscles below the hypodermis.

In terms of biological role, could be involved in muscle contraction. The protein is Calponin homolog OV9M of Onchocerca volvulus.